We begin with the raw amino-acid sequence, 331 residues long: Threonine-phosphate decarboxylase (331 aa).

N6-(pyridoxal phosphate)lysine is present on Lys-192.

This sequence belongs to the class-I pyridoxal-phosphate-dependent aminotransferase family. Homodimer. It depends on pyridoxal 5'-phosphate as a cofactor.

Its subcellular location is the cytoplasm. It catalyses the reaction O-phospho-L-threonine + H(+) = (R)-1-aminopropan-2-yl phosphate + CO2. The protein operates within cofactor biosynthesis; adenosylcobalamin biosynthesis. Functionally, decarboxylates L-threonine-O-3-phosphate to yield (R)-1-amino-2-propanol O-2-phosphate, the precursor for the linkage between the nucleotide loop and the corrin ring in cobalamin. This Pseudomonas aeruginosa (strain ATCC 15692 / DSM 22644 / CIP 104116 / JCM 14847 / LMG 12228 / 1C / PRS 101 / PAO1) protein is Threonine-phosphate decarboxylase (cobC).